The chain runs to 392 residues: MTLLNSYFGSFGGMYVPQILMPALYQLESEFVLSLKNLQFKKKLANLLKNYAGRPTPLTLCRNLTKGTNTRIYLKREDLLHGGAHKTNQVLGQALLAKQMKKKEIIAETGAGQHGVAAALSCALLNLKCRIYMGIKDIERQKQNVFRMKLMGAQVIPVKSGNGTLKDACNEALRDWSENYINAHYMLGTAAGPHPYPTIVKQFQSVIGKETKQQIFEKEHCLPNSVIACVGGGSNAIGIFSSFIEDTSVNLIGVEPGGIGIHTEKHGASLICGETGIFFGMKSKVMQTHEGQIKESWSISAGLDFPAVGPEHAWLDSIKRVTYVSITDSEAVHAFQHLSKLEGIIPALESSHALAYAIKLMNNYPNKNQTLIVNISGRGDKDLKTVEKFLNK.

Residue Lys86 is modified to N6-(pyridoxal phosphate)lysine.

The protein belongs to the TrpB family. In terms of assembly, tetramer of two alpha and two beta chains. Pyridoxal 5'-phosphate serves as cofactor.

The enzyme catalyses (1S,2R)-1-C-(indol-3-yl)glycerol 3-phosphate + L-serine = D-glyceraldehyde 3-phosphate + L-tryptophan + H2O. Its pathway is amino-acid biosynthesis; L-tryptophan biosynthesis; L-tryptophan from chorismate: step 5/5. In terms of biological role, the beta subunit is responsible for the synthesis of L-tryptophan from indole and L-serine. This chain is Tryptophan synthase beta chain (trpB), found in Buchnera aphidicola subsp. Schlechtendalia chinensis.